The sequence spans 399 residues: MKLRLLRCLRQQPAKPAAVMTHKEDQYPVSLDHHVLKDMAKGVRDTTVKILLLGTAESGKTTIIKQMRILHINGFTDDERREKIPEIYQNIHESILQLVGQMGVLGIDFGSCTSERSADYILSLPGSAPEYMNEEYCDHVTTLWNDVGIRACYDRSNEFPLLDSAKYFLDNFVRISDAEYIPSTEDILHSRKITTGISQITFRVPIPKSMGGGEQQFQMYDVGGQRDQRNKWIQVFEGIQAVLFLISCSEFDQNLREDPSQNRLQEALKLFRAVWQNRFLASAGLIVFLNKYDIMERKIRAGKHIVDYFPEYEDFCKRPQQDNCFGESDWTKMFIKQKLVDITQEPFKRHSRNQVDLGTSERECYYHFTVATDTRCIRDVFCDVQKMILSENVSSMGLF.

The G-alpha domain occupies 46-399 (TTVKILLLGT…SENVSSMGLF (354 aa)). The interval 49–62 (KILLLGTAESGKTT) is G1 motif. GTP is bound by residues 54–61 (GTAESGKT), 188–194 (LHSRKIT), 221–225 (DVGGQ), 290–293 (NKYD), and alanine 371. Residues 186–194 (DILHSRKIT) form a G2 motif region. Threonine 194 contacts Mg(2+). The G3 motif stretch occupies residues 217–226 (FQMYDVGGQR). The segment at 286 to 293 (IVFLNKYD) is G4 motif. The interval 369 to 374 (TVATDT) is G5 motif.

This sequence belongs to the G-alpha family. G proteins are composed of 3 units; alpha, beta and gamma. The alpha chain contains the guanine nucleotide binding site. As to expression, during embryogenesis, expressed primarily in the developing gut and transiently in the amnioserosa.

Guanine nucleotide-binding proteins (G proteins) are involved as modulators or transducers in various transmembrane signaling systems. This is Guanine nucleotide-binding protein G(f) subunit alpha (Galphaf) from Drosophila melanogaster (Fruit fly).